A 406-amino-acid chain; its full sequence is Tryptophan synthase beta chain (406 aa).

The residue at position 99 (lysine 99) is an N6-(pyridoxal phosphate)lysine.

It belongs to the TrpB family. As to quaternary structure, tetramer of two alpha and two beta chains. The cofactor is pyridoxal 5'-phosphate.

It catalyses the reaction (1S,2R)-1-C-(indol-3-yl)glycerol 3-phosphate + L-serine = D-glyceraldehyde 3-phosphate + L-tryptophan + H2O. It participates in amino-acid biosynthesis; L-tryptophan biosynthesis; L-tryptophan from chorismate: step 5/5. In terms of biological role, the beta subunit is responsible for the synthesis of L-tryptophan from indole and L-serine. The chain is Tryptophan synthase beta chain from Rhizobium johnstonii (strain DSM 114642 / LMG 32736 / 3841) (Rhizobium leguminosarum bv. viciae).